A 343-amino-acid chain; its full sequence is Protein RecA (343 aa).

68-75 contacts ATP; sequence GPESSGKT.

It belongs to the RecA family.

It is found in the cytoplasm. In terms of biological role, can catalyze the hydrolysis of ATP in the presence of single-stranded DNA, the ATP-dependent uptake of single-stranded DNA by duplex DNA, and the ATP-dependent hybridization of homologous single-stranded DNAs. It interacts with LexA causing its activation and leading to its autocatalytic cleavage. This is Protein RecA from Syntrophobacter fumaroxidans (strain DSM 10017 / MPOB).